The chain runs to 128 residues: Large ribosomal subunit protein bL12 (128 aa).

It belongs to the bacterial ribosomal protein bL12 family. As to quaternary structure, homodimer. Part of the ribosomal stalk of the 50S ribosomal subunit. Forms a multimeric L10(L12)X complex, where L10 forms an elongated spine to which 2 to 4 L12 dimers bind in a sequential fashion. Binds GTP-bound translation factors.

In terms of biological role, forms part of the ribosomal stalk which helps the ribosome interact with GTP-bound translation factors. Is thus essential for accurate translation. The protein is Large ribosomal subunit protein bL12 of Desulfovibrio desulfuricans (strain ATCC 27774 / DSM 6949 / MB).